Reading from the N-terminus, the 321-residue chain is tRNA pseudouridine synthase B (321 aa).

The active-site Nucleophile is the D47.

The protein belongs to the pseudouridine synthase TruB family. Type 1 subfamily.

It carries out the reaction uridine(55) in tRNA = pseudouridine(55) in tRNA. Responsible for synthesis of pseudouridine from uracil-55 in the psi GC loop of transfer RNAs. This chain is tRNA pseudouridine synthase B, found in Shewanella baltica (strain OS223).